Reading from the N-terminus, the 530-residue chain is Autoinducer-2 kinase (530 aa).

This sequence belongs to the FGGY kinase family.

The protein localises to the cytoplasm. It catalyses the reaction (S)-4,5-dihydroxypentane-2,3-dione + ATP = (2S)-2-hydroxy-3,4-dioxopentyl phosphate + ADP + H(+). In terms of biological role, catalyzes the phosphorylation of autoinducer-2 (AI-2) to phospho-AI-2, which subsequently inactivates the transcriptional regulator LsrR and leads to the transcription of the lsr operon. Phosphorylates the ring-open form of (S)-4,5-dihydroxypentane-2,3-dione (DPD), which is the precursor to all AI-2 signaling molecules, at the C5 position. This chain is Autoinducer-2 kinase, found in Photorhabdus laumondii subsp. laumondii (strain DSM 15139 / CIP 105565 / TT01) (Photorhabdus luminescens subsp. laumondii).